Consider the following 569-residue polypeptide: Sulfite reductase [NADPH] hemoprotein beta-component (569 aa).

Positions 433, 439, 478, and 482 each coordinate [4Fe-4S] cluster. Cysteine 482 contacts siroheme.

This sequence belongs to the nitrite and sulfite reductase 4Fe-4S domain family. In terms of assembly, alpha(8)-beta(8). The alpha component is a flavoprotein, the beta component is a hemoprotein. Requires siroheme as cofactor. [4Fe-4S] cluster is required as a cofactor.

It carries out the reaction hydrogen sulfide + 3 NADP(+) + 3 H2O = sulfite + 3 NADPH + 4 H(+). It functions in the pathway sulfur metabolism; hydrogen sulfide biosynthesis; hydrogen sulfide from sulfite (NADPH route): step 1/1. In terms of biological role, component of the sulfite reductase complex that catalyzes the 6-electron reduction of sulfite to sulfide. This is one of several activities required for the biosynthesis of L-cysteine from sulfate. The polypeptide is Sulfite reductase [NADPH] hemoprotein beta-component (Shewanella sediminis (strain HAW-EB3)).